The chain runs to 180 residues: Inner membrane-spanning protein YciB (180 aa).

Helical transmembrane passes span 22–42 (IFVASGALIVATLLALAFTWF), 50–70 (MTLVTAIMVLVFGTLTLAFHS), 72–92 (LFIKWKVTVLYVLFAVALLVS), 121–141 (MSWAVFFLVCGLLNIYVAFWL), and 149–169 (FKVFGLTALTLVFTLISGVYI).

Belongs to the YciB family.

The protein localises to the cell inner membrane. Functionally, plays a role in cell envelope biogenesis, maintenance of cell envelope integrity and membrane homeostasis. The protein is Inner membrane-spanning protein YciB of Yersinia enterocolitica serotype O:8 / biotype 1B (strain NCTC 13174 / 8081).